The following is a 250-amino-acid chain: Proteasome subunit alpha type-7 (250 aa).

This sequence belongs to the peptidase T1A family. The 26S proteasome consists of a 20S proteasome core and two 19S regulatory subunits. The 20S proteasome core is composed of 28 subunits that are arranged in four stacked rings, resulting in a barrel-shaped structure. The two end rings are each formed by seven alpha subunits, and the two central rings are each formed by seven beta subunits. The catalytic chamber with the active sites is on the inside of the barrel.

The protein localises to the cytoplasm. The protein resides in the nucleus. Functionally, the proteasome is a multicatalytic proteinase complex which is characterized by its ability to cleave peptides with Arg, Phe, Tyr, Leu, and Glu adjacent to the leaving group at neutral or slightly basic pH. The proteasome has an ATP-dependent proteolytic activity. This Dictyostelium discoideum (Social amoeba) protein is Proteasome subunit alpha type-7 (psmA7).